An 874-amino-acid polypeptide reads, in one-letter code: Alanine--tRNA ligase (874 aa).

4 residues coordinate Zn(2+): His-564, His-568, Cys-665, and His-669.

This sequence belongs to the class-II aminoacyl-tRNA synthetase family. Zn(2+) is required as a cofactor.

It localises to the cytoplasm. It catalyses the reaction tRNA(Ala) + L-alanine + ATP = L-alanyl-tRNA(Ala) + AMP + diphosphate. In terms of biological role, catalyzes the attachment of alanine to tRNA(Ala) in a two-step reaction: alanine is first activated by ATP to form Ala-AMP and then transferred to the acceptor end of tRNA(Ala). Also edits incorrectly charged Ser-tRNA(Ala) and Gly-tRNA(Ala) via its editing domain. This chain is Alanine--tRNA ligase, found in Burkholderia cenocepacia (strain HI2424).